Here is a 61-residue protein sequence, read N- to C-terminus: UPF0434 protein PA14_25520 (61 aa).

The protein belongs to the UPF0434 family.

This Pseudomonas aeruginosa (strain UCBPP-PA14) protein is UPF0434 protein PA14_25520.